The sequence spans 32 residues: TVCVYRTCDKDCKRRGYRSGKCINNACKCYPY.

Disulfide bonds link Cys-3/Cys-22, Cys-8/Cys-27, and Cys-12/Cys-29.

As to expression, expressed by the venom gland.

It is found in the secreted. In terms of biological role, blocks human voltage-gated potassium (Kv) channels Kv1.2/KCNA2 and Kv1.3/KCNA3. Does not block human Kv1.1 at 100nM concentration. The sequence is that of Potassium channel toxin alpha-KTx 10.6 from Centruroides bonito (Scorpion).